The sequence spans 218 residues: Adenylate kinase (218 aa).

10-15 contributes to the ATP binding site; it reads GAGKGT. The segment at 30–59 is NMP; that stretch reads STGDMLRAAVKAGTPLGQQAKAVMDAGQLV. AMP-binding positions include threonine 31, arginine 36, 57-59, 85-88, and glutamine 92; these read QLV and GFPR. The interval 122-159 is LID; that stretch reads GRRSHPASGRTYHVKFNPPKVEGQDDVTGEPLVQREDD. Residues arginine 123 and 132-133 contribute to the ATP site; that span reads TY. A disordered region spans residues 127-151; that stretch reads PASGRTYHVKFNPPKVEGQDDVTGE. Positions 156 and 167 each coordinate AMP. Glycine 203 is an ATP binding site.

Belongs to the adenylate kinase family. Monomer.

The protein localises to the cytoplasm. The enzyme catalyses AMP + ATP = 2 ADP. Its pathway is purine metabolism; AMP biosynthesis via salvage pathway; AMP from ADP: step 1/1. In terms of biological role, catalyzes the reversible transfer of the terminal phosphate group between ATP and AMP. Plays an important role in cellular energy homeostasis and in adenine nucleotide metabolism. This Delftia acidovorans (strain DSM 14801 / SPH-1) protein is Adenylate kinase.